The following is a 293-amino-acid chain: ATP synthase gamma chain (293 aa).

The protein belongs to the ATPase gamma chain family. As to quaternary structure, F-type ATPases have 2 components, CF(1) - the catalytic core - and CF(0) - the membrane proton channel. CF(1) has five subunits: alpha(3), beta(3), gamma(1), delta(1), epsilon(1). CF(0) has three main subunits: a, b and c.

It localises to the cell inner membrane. Produces ATP from ADP in the presence of a proton gradient across the membrane. The gamma chain is believed to be important in regulating ATPase activity and the flow of protons through the CF(0) complex. In Gluconacetobacter diazotrophicus (strain ATCC 49037 / DSM 5601 / CCUG 37298 / CIP 103539 / LMG 7603 / PAl5), this protein is ATP synthase gamma chain.